The following is a 259-amino-acid chain: 3-deoxy-manno-octulosonate cytidylyltransferase (259 aa).

It belongs to the KdsB family.

The protein localises to the cytoplasm. It catalyses the reaction 3-deoxy-alpha-D-manno-oct-2-ulosonate + CTP = CMP-3-deoxy-beta-D-manno-octulosonate + diphosphate. The protein operates within nucleotide-sugar biosynthesis; CMP-3-deoxy-D-manno-octulosonate biosynthesis; CMP-3-deoxy-D-manno-octulosonate from 3-deoxy-D-manno-octulosonate and CTP: step 1/1. It functions in the pathway bacterial outer membrane biogenesis; lipopolysaccharide biosynthesis. Its function is as follows. Activates KDO (a required 8-carbon sugar) for incorporation into bacterial lipopolysaccharide in Gram-negative bacteria. In Maricaulis maris (strain MCS10) (Caulobacter maris), this protein is 3-deoxy-manno-octulosonate cytidylyltransferase.